The chain runs to 48 residues: Large ribosomal subunit protein bL34 (48 aa).

The protein belongs to the bacterial ribosomal protein bL34 family.

The sequence is that of Large ribosomal subunit protein bL34 from Gloeothece citriformis (strain PCC 7424) (Cyanothece sp. (strain PCC 7424)).